The chain runs to 115 residues: Large ribosomal subunit protein bL19 (115 aa).

Belongs to the bacterial ribosomal protein bL19 family.

In terms of biological role, this protein is located at the 30S-50S ribosomal subunit interface and may play a role in the structure and function of the aminoacyl-tRNA binding site. The protein is Large ribosomal subunit protein bL19 of Streptococcus thermophilus (strain CNRZ 1066).